Here is a 416-residue protein sequence, read N- to C-terminus: Antigen EG13 (416 aa).

Residues 1–247 (MIQERADIEK…TVAKVDADAD (247 aa)) enclose the F-BAR domain. The segment at 297–327 (LKTFTSPDRGGPIPGTTDSGSNISTSPVHTT) is disordered. The segment covering 312–327 (TTDSGSNISTSPVHTT) has biased composition (polar residues). In terms of domain architecture, SH3 spans 361-416 (RPGVPIRALYDYVGVEADELSFNSGDLFEKLEDEDEQGWCKGRKDGRVGLYPRQLR).

The sequence is that of Antigen EG13 (EG13) from Echinococcus granulosus (Hydatid tapeworm).